The primary structure comprises 153 residues: uncharacterized protein (153 aa).

The protein resides in the mitochondrion. This is an uncharacterized protein from Arabidopsis thaliana (Mouse-ear cress).